A 186-amino-acid polypeptide reads, in one-letter code: Large ribosomal subunit protein eL18B (186 aa).

An N6,N6,N6-trimethyllysine modification is found at Lys50. Lys116 is covalently cross-linked (Glycyl lysine isopeptide (Lys-Gly) (interchain with G-Cter in ubiquitin)).

It belongs to the eukaryotic ribosomal protein eL18 family. Component of the large ribosomal subunit (LSU). Mature yeast ribosomes consist of a small (40S) and a large (60S) subunit. The 40S small subunit contains 1 molecule of ribosomal RNA (18S rRNA) and 33 different proteins (encoded by 57 genes). The large 60S subunit contains 3 rRNA molecules (25S, 5.8S and 5S rRNA) and 46 different proteins (encoded by 81 genes). eL18 interacts with NAP1.

It is found in the cytoplasm. Component of the ribosome, a large ribonucleoprotein complex responsible for the synthesis of proteins in the cell. The small ribosomal subunit (SSU) binds messenger RNAs (mRNAs) and translates the encoded message by selecting cognate aminoacyl-transfer RNA (tRNA) molecules. The large subunit (LSU) contains the ribosomal catalytic site termed the peptidyl transferase center (PTC), which catalyzes the formation of peptide bonds, thereby polymerizing the amino acids delivered by tRNAs into a polypeptide chain. The nascent polypeptides leave the ribosome through a tunnel in the LSU and interact with protein factors that function in enzymatic processing, targeting, and the membrane insertion of nascent chains at the exit of the ribosomal tunnel. The polypeptide is Large ribosomal subunit protein eL18B (Saccharomyces cerevisiae (strain ATCC 204508 / S288c) (Baker's yeast)).